A 51-amino-acid chain; its full sequence is Large ribosomal subunit protein bL33 (51 aa).

The tract at residues 1–24 (MREKIRLNSSAGTGHFYTTDKNKR) is disordered.

It belongs to the bacterial ribosomal protein bL33 family.

The protein is Large ribosomal subunit protein bL33 of Cellvibrio japonicus (strain Ueda107) (Pseudomonas fluorescens subsp. cellulosa).